We begin with the raw amino-acid sequence, 208 residues long: MDLFDLIFPPPPQSPSKLHPTQNHILPPEPLNRDFGDTRKNHKKAQPRRTTKAPSTSSPTIHDRQTPPRPTTPKSPTEKLLPIYHKFADGTEVVNPAAYAQRGFGWVKQNNTARVSWAKWAQSTKKCDDDIYGLKWIEERYPNWRDSNFRIRERRRSRSRSPQLSDNGSEDISIYLGRANSSSPNPTATGSETSYGSPTDAIYIPRNY.

Disordered regions lie at residues 1 to 78 (MDLF…SPTE) and 154 to 208 (RRRS…PRNY). The span at 40-51 (KNHKKAQPRRTT) shows a compositional bias: basic residues. Polar residues predominate over residues 179–197 (ANSSSPNPTATGSETSYGS).

This is an uncharacterized protein from Caenorhabditis elegans.